A 673-amino-acid chain; its full sequence is ATP-dependent DNA helicase Rep (673 aa).

One can recognise a UvrD-like helicase ATP-binding domain in the interval 1-280 (MRLNPGQQQA…IKLEQNYRSS (280 aa)). ATP-binding positions include 22–29 (AGAGSGKT) and R278. In terms of domain architecture, UvrD-like helicase C-terminal spans 281–562 (GRILKAANIL…QLMTLHASKG (282 aa)).

It belongs to the helicase family. UvrD subfamily. As to quaternary structure, homodimer in association with DNA.

The catalysed reaction is Couples ATP hydrolysis with the unwinding of duplex DNA by translocating in the 3'-5' direction.. The enzyme catalyses ATP + H2O = ADP + phosphate + H(+). Binding to DNA induces dimerization, which is required for DNA helicase activity. Helicase activity is stimulated by PriC. Rep helicase is a single-stranded (ss)DNA-dependent ATPase involved in DNA replication; it can initiate unwinding at a nick in the DNA. It binds to ssDNA and acts in a progressive fashion along the DNA in the 3' to 5' direction. Binds double-stranded (ds)DNA with a 5' ss- but not 3' ss-extension and forked structures with either lagging or leading ssDNA. Part of the PriC-Rep pathway for restart of stalled replication forks, which reloads the DnaB replicative helicase on sites other than the origin of replication. The sequence is that of ATP-dependent DNA helicase Rep from Escherichia coli (strain K12).